Reading from the N-terminus, the 129-residue chain is Large ribosomal subunit protein bL20 (129 aa).

Belongs to the bacterial ribosomal protein bL20 family.

In terms of biological role, binds directly to 23S ribosomal RNA and is necessary for the in vitro assembly process of the 50S ribosomal subunit. It is not involved in the protein synthesizing functions of that subunit. In Kineococcus radiotolerans (strain ATCC BAA-149 / DSM 14245 / SRS30216), this protein is Large ribosomal subunit protein bL20.